Here is a 430-residue protein sequence, read N- to C-terminus: Bifunctional protein GlmU (430 aa).

The tract at residues 1-223 (MSISVVILAA…EEEFKGVNSK (223 aa)) is pyrophosphorylase. Residues 8–11 (LAAG), lysine 22, and 81–82 (GT) contribute to the UDP-N-acetyl-alpha-D-glucosamine site. Aspartate 102 is a binding site for Mg(2+). 4 residues coordinate UDP-N-acetyl-alpha-D-glucosamine: glycine 135, glutamate 149, asparagine 164, and asparagine 221. Asparagine 221 is a Mg(2+) binding site. The linker stretch occupies residues 224–244 (LDLARAEEIMQRRIKEALMMA). An N-acetyltransferase region spans residues 245–430 (GVTMCLPETI…NFFYKFFGDK (186 aa)). Residues arginine 308 and lysine 325 each coordinate UDP-N-acetyl-alpha-D-glucosamine. The active-site Proton acceptor is histidine 336. UDP-N-acetyl-alpha-D-glucosamine contacts are provided by tyrosine 339 and asparagine 350. Residues alanine 353, 359-360 (NY), serine 378, alanine 396, and arginine 413 contribute to the acetyl-CoA site.

In the N-terminal section; belongs to the N-acetylglucosamine-1-phosphate uridyltransferase family. This sequence in the C-terminal section; belongs to the transferase hexapeptide repeat family. Homotrimer. Mg(2+) is required as a cofactor.

It localises to the cytoplasm. It carries out the reaction alpha-D-glucosamine 1-phosphate + acetyl-CoA = N-acetyl-alpha-D-glucosamine 1-phosphate + CoA + H(+). The enzyme catalyses N-acetyl-alpha-D-glucosamine 1-phosphate + UTP + H(+) = UDP-N-acetyl-alpha-D-glucosamine + diphosphate. It functions in the pathway nucleotide-sugar biosynthesis; UDP-N-acetyl-alpha-D-glucosamine biosynthesis; N-acetyl-alpha-D-glucosamine 1-phosphate from alpha-D-glucosamine 6-phosphate (route II): step 2/2. Its pathway is nucleotide-sugar biosynthesis; UDP-N-acetyl-alpha-D-glucosamine biosynthesis; UDP-N-acetyl-alpha-D-glucosamine from N-acetyl-alpha-D-glucosamine 1-phosphate: step 1/1. It participates in bacterial outer membrane biogenesis; LPS lipid A biosynthesis. Functionally, catalyzes the last two sequential reactions in the de novo biosynthetic pathway for UDP-N-acetylglucosamine (UDP-GlcNAc). The C-terminal domain catalyzes the transfer of acetyl group from acetyl coenzyme A to glucosamine-1-phosphate (GlcN-1-P) to produce N-acetylglucosamine-1-phosphate (GlcNAc-1-P), which is converted into UDP-GlcNAc by the transfer of uridine 5-monophosphate (from uridine 5-triphosphate), a reaction catalyzed by the N-terminal domain. In Sulfurovum sp. (strain NBC37-1), this protein is Bifunctional protein GlmU.